The chain runs to 425 residues: Metalloprotease AF_0655 (425 aa).

The protein belongs to the peptidase U62 family.

Its function is as follows. Probable metalloprotease. In Archaeoglobus fulgidus (strain ATCC 49558 / DSM 4304 / JCM 9628 / NBRC 100126 / VC-16), this protein is Metalloprotease AF_0655.